A 685-amino-acid chain; its full sequence is MGALTSRQHAGVEEVDIPSNSVYRYPPKSGSYFASHFIMGGEKFDSTHPEGYLFGENSDLNFLGNRPVAFPYAAPPPQEPVKTLRSLINIRKDTLRLVKCAEEVKSHGEEAGKAKVHYNVEFTFDTDARVAITIYYQATEEFQNGIASYIPKDNSLQSETVHYKRGVFQQFCLPSHTVDPSEWAEEELGFDLDREVYPLVVHAVVDEGDEYFGHCHVLLGTFEKHPDGTFCVKPLKQKQVVDGVSYLLQEIYGIENKYNTQDSKVAEDDVSDNSAECVVCLSDVRDTLILPCRHLCLCNTCADTLRYQANNCPICRLPFRALLQIRAMRKKLGPLSPSSFNPIISSQTSDSEEHSSSENIPPGYEVVSLLEALNGPLTSSPAVPPLHVLGDGHLSGMLPSYGSDGYLPPVRTLSPLDRLSDCNNQGLKLKKSLSKSISQNSSVLHEEEDERSCSESDTQLSQRLSVQHPEEGPDVTPESENLTLSSSGAVDQSSCTGTPLSSTISSPEDPASSSLAQSVMSMASSQISTDTVSSMSGSYIAPGTEEEGEALPSPRAASRAPSEGEETPAESPDSNFAGLPAGEQDAEGNDIIEEEDRSPVREDGQRTCAFLGMECDNNNDFDVASVKALDNKLCSEVCLPGEWQCAEHELGGRRPSARPRSPRGGLGKEASAFRIETVALPGTYV.

Glycine 2 carries the N-myristoyl glycine lipid modification. An RING-type zinc finger spans residues 276 to 315; the sequence is ECVVCLSDVRDTLILPCRHLCLCNTCADTLRYQANNCPIC. A D-box 1 motif is present at residues 329 to 332; the sequence is RKKL. 3 disordered regions span residues 339-361, 433-584, and 650-672; these read SFNPIISSQTSDSEEHSSSENIP, LSKS…AGEQ, and LGGRRPSARPRSPRGGLGKEASA. Residues 434-443 are compositionally biased toward low complexity; the sequence is SKSISQNSSV. A compositionally biased stretch (polar residues) spans 478–537; sequence ESENLTLSSSGAVDQSSCTGTPLSSTISSPEDPASSSLAQSVMSMASSQISTDTVSSMSG. Residues 552–561 are compositionally biased toward low complexity; it reads PSPRAASRAP. The D-box 2 motif lies at 657 to 660; the sequence is ARPR.

As to quaternary structure, interacts with APBB1. Interacts with CHD1; CHD1-binding controls RNF157 stability. Also interacts with ATRN, MEGF8, TECR, MSI2, PLRG1, BYSL, MTERF3, PSMA1, MRPS18B, PRPF4, FASTKD2, SLC25A1, SMU1, CNOT9, MRPS2, MAGT1, FXR2, EMD, PSMD8, HDAC1, RAN, HSD17B12, TXNDC5 and MRPL19.

Its subcellular location is the cytoplasm. The enzyme catalyses S-ubiquitinyl-[E2 ubiquitin-conjugating enzyme]-L-cysteine + [acceptor protein]-L-lysine = [E2 ubiquitin-conjugating enzyme]-L-cysteine + N(6)-ubiquitinyl-[acceptor protein]-L-lysine.. Its function is as follows. E3 ubiquitin ligase that ubiquitinates APBB1 for its degradation by the proteasome and thus prevents apoptosis and promotes survival of neurons. Has a dual role in neurons as it is also required for dendrite growth and maintenance for which its ligase activity is not critical. May act as a scaffold molecule to regulate this process. Acts as a downstream effector of the interconnected PI3K and MAPK signaling pathways and thus participates in the regulation of the cell cycle. This Mus musculus (Mouse) protein is E3 ubiquitin ligase Rnf157 (Rnf157).